The primary structure comprises 297 residues: Formamidopyrimidine-DNA glycosylase (297 aa).

Pro-2 (schiff-base intermediate with DNA) is an active-site residue. Glu-3 functions as the Proton donor in the catalytic mechanism. Lys-58 serves as the catalytic Proton donor; for beta-elimination activity. DNA contacts are provided by His-106, Arg-125, and Arg-168. The FPG-type zinc-finger motif lies at 259–295; the sequence is RVYDREGLACTARGCRGVVRRVVQSGRSTFFCEVCQP. Arg-285 acts as the Proton donor; for delta-elimination activity in catalysis.

This sequence belongs to the FPG family. As to quaternary structure, monomer. Zn(2+) serves as cofactor.

The catalysed reaction is Hydrolysis of DNA containing ring-opened 7-methylguanine residues, releasing 2,6-diamino-4-hydroxy-5-(N-methyl)formamidopyrimidine.. It catalyses the reaction 2'-deoxyribonucleotide-(2'-deoxyribose 5'-phosphate)-2'-deoxyribonucleotide-DNA = a 3'-end 2'-deoxyribonucleotide-(2,3-dehydro-2,3-deoxyribose 5'-phosphate)-DNA + a 5'-end 5'-phospho-2'-deoxyribonucleoside-DNA + H(+). Its function is as follows. Involved in base excision repair of DNA damaged by oxidation or by mutagenic agents. Acts as a DNA glycosylase that recognizes and removes damaged bases. Has a preference for oxidized purines, such as 7,8-dihydro-8-oxoguanine (8-oxoG). Has AP (apurinic/apyrimidinic) lyase activity and introduces nicks in the DNA strand. Cleaves the DNA backbone by beta-delta elimination to generate a single-strand break at the site of the removed base with both 3'- and 5'-phosphates. The chain is Formamidopyrimidine-DNA glycosylase from Methylobacterium nodulans (strain LMG 21967 / CNCM I-2342 / ORS 2060).